A 360-amino-acid polypeptide reads, in one-letter code: Glycoprotein-N-acetylgalactosamine 3-beta-galactosyltransferase 1 (360 aa).

Residues 1–7 are Cytoplasmic-facing; it reads MSIICAK. The helical; Signal-anchor for type II membrane protein transmembrane segment at 8–28 threads the bilayer; it reads VAWLPLTLGTAMGFLITFYLA. The Lumenal portion of the chain corresponds to 29-360; sequence RTLLERNSQP…SDFLEPPMES (332 aa). Cysteine 79 and cysteine 103 form a disulfide bridge. Positions 82, 126, 127, 128, and 134 each coordinate UDP. N-linked (GlcNAc...) asparagine glycosylation occurs at asparagine 148. UDP is bound at residue aspartate 157. Residues aspartate 157 and aspartate 159 each contribute to the Mn(2+) site. Residue asparagine 173 is glycosylated (N-linked (GlcNAc...) asparagine). Cysteine 220 and cysteine 234 are oxidised to a cystine. Residue tryptophan 274 coordinates a glycoprotein. Cysteine 289 and cysteine 290 are disulfide-bonded. Residues histidine 298 and tyrosine 299 each coordinate UDP. Histidine 298 provides a ligand contact to Mn(2+). 2 N-linked (GlcNAc...) asparagine glycosylation sites follow: asparagine 341 and asparagine 347.

It belongs to the glycosyltransferase 31 family. Beta3-Gal-T subfamily. In terms of assembly, homodimer; disulfide-linked. Requires Mn(2+) as cofactor.

The protein localises to the membrane. The enzyme catalyses an N-acetyl-alpha-D-galactosaminyl derivative + UDP-alpha-D-galactose = a beta-D-galactosyl-(1-&gt;3)-N-acetyl-alpha-D-galactosaminyl derivative + UDP + H(+). Its pathway is protein modification; protein glycosylation. Its function is as follows. Glycosyltransferase that generates the core 1 O-glycan Gal-beta1-3GalNAc-alpha1-Ser/Thr (T antigen), which is a precursor for many extended O-glycans in glycoproteins. This Xenopus laevis (African clawed frog) protein is Glycoprotein-N-acetylgalactosamine 3-beta-galactosyltransferase 1 (c1galt1).